We begin with the raw amino-acid sequence, 273 residues long: Large ribosomal subunit protein uL2cz/uL2cy (273 aa).

Disordered stretches follow at residues 1 to 22 and 225 to 273; these read MAKH…DRQV and PVDH…RRRK.

It belongs to the universal ribosomal protein uL2 family. As to quaternary structure, part of the 50S ribosomal subunit.

The protein localises to the plastid. Its subcellular location is the chloroplast. The protein is Large ribosomal subunit protein uL2cz/uL2cy (rpl2-A) of Saccharum hybrid (Sugarcane).